Consider the following 291-residue polypeptide: Cell division protein FtsX (291 aa).

Residues 1–18 are Cytoplasmic-facing; it reads MSSNFDKFQKRRLISSYF. The helical transmembrane segment at 19–39 threads the bilayer; sequence SVVLSVFLVLFLLGVLGLFII. Residues 40-162 are Periplasmic-facing; that stretch reads NSKKLADDFK…VNLVNDNIKK (123 aa). A helical membrane pass occupies residues 163–183; sequence VSMWILIISGFLTVIAVLLIN. Residues 184–220 lie on the Cytoplasmic side of the membrane; it reads SSLRLSIHSNRFIIKTMQMVGATKSFIRKPFVMRSVK. The chain crosses the membrane as a helical span at residues 221 to 241; it reads LGMLGALLAIIALIGLLFYVE. Residues 242 to 253 lie on the Periplasmic side of the membrane; that stretch reads TNFPGLGILEDK. A helical transmembrane segment spans residues 254–274; the sequence is ALIGLVLLAVFGLGVLITWVS. Residues 275 to 291 lie on the Cytoplasmic side of the membrane; the sequence is THFATQRFLNLRTDDLY.

The protein belongs to the ABC-4 integral membrane protein family. FtsX subfamily.

It localises to the cell inner membrane. Functionally, required for cell division and gliding motility. This Flavobacterium johnsoniae (strain ATCC 17061 / DSM 2064 / JCM 8514 / BCRC 14874 / CCUG 350202 / NBRC 14942 / NCIMB 11054 / UW101) (Cytophaga johnsonae) protein is Cell division protein FtsX.